A 196-amino-acid chain; its full sequence is Inosine triphosphate pyrophosphatase 2 (196 aa).

20–25 (TGNDGK) contributes to the ITP binding site. E48 lines the Mg(2+) pocket. ITP contacts are provided by residues K61, 77–78 (DT), K94, 153–156 (FGWD), K177, and 182–183 (PR).

The protein belongs to the HAM1 NTPase family. In terms of assembly, homodimer. Requires Mg(2+) as cofactor. Mn(2+) serves as cofactor.

The protein resides in the cytoplasm. It catalyses the reaction ITP + H2O = IMP + diphosphate + H(+). The catalysed reaction is dITP + H2O = dIMP + diphosphate + H(+). It carries out the reaction XTP + H2O = XMP + diphosphate + H(+). Its function is as follows. Pyrophosphatase that hydrolyzes non-canonical purine nucleotides such as inosine triphosphate (ITP), deoxyinosine triphosphate (dITP) or xanthosine 5'-triphosphate (XTP) to their respective monophosphate derivatives. The enzyme does not distinguish between the deoxy- and ribose forms. Probably excludes non-canonical purines from RNA and DNA precursor pools, thus preventing their incorporation into RNA and DNA and avoiding chromosomal lesions. This is Inosine triphosphate pyrophosphatase 2 from Trypanosoma cruzi (strain CL Brener).